We begin with the raw amino-acid sequence, 297 residues long: Acetaldehyde dehydrogenase (297 aa).

18–21 (TGNI) contacts NAD(+). The Acyl-thioester intermediate role is filled by C133. NAD(+) is bound by residues 165–173 (SAGPATRLN) and N275.

It belongs to the acetaldehyde dehydrogenase family.

The enzyme catalyses acetaldehyde + NAD(+) + CoA = acetyl-CoA + NADH + H(+). The polypeptide is Acetaldehyde dehydrogenase (Spirochaeta aurantia).